The following is a 179-amino-acid chain: Replication restart protein DnaT (179 aa).

The segment at 151 to 179 (SRASNGGQPKRDVNSVSEPDSHIPRGFRG) is disordered. Basic and acidic residues predominate over residues 159–173 (PKRDVNSVSEPDSHI).

This sequence belongs to the DnaT family. In terms of assembly, homooligomerizes. Interacts with PriB. Component of the replication restart primosome. Primosome assembly occurs via a 'hand-off' mechanism. PriA binds to replication forks, subsequently PriB then DnaT bind; DnaT then displaces ssDNA to generate the helicase loading substrate.

Functionally, involved in the restart of stalled replication forks, which reloads the replicative helicase on sites other than the origin of replication. Can function in multiple replication restart pathways. Displaces ssDNA from a PriB-ssDNA complex. Probably forms a spiral filament on ssDNA. This is Replication restart protein DnaT from Klebsiella pneumoniae (strain 342).